The following is a 237-amino-acid chain: MNKPIYKRILLKLSGEALQGDEGFGIDPSILDRMALEIKELIAMDVEVGVVIGGGNLFRGAKLAKAGMNRVVGDHMGMLATVMNGLAMRDALHRADVNAKLMSAFQLNGICDTYNWSEAIKMLREKRVVIFSAGTGSPFFTTDSAACLRGIEIEADVVLKATKVDGVYNCDPAKNPDAKLFNKLTYAEVIDKELQVMDLAAFTLARDHGMPIRVFNMGKPGALREVVTGETEGTIIS.

ATP is bound at residue 12 to 15 (KLSG). The interval 20 to 25 (GDEGFG) is involved in allosteric activation by GTP. G54 serves as a coordination point for UMP. 2 residues coordinate ATP: G55 and R59. Residues D74 and 135–142 (TGSPFFTT) each bind UMP. ATP is bound by residues T162, Y168, and D171.

The protein belongs to the UMP kinase family. In terms of assembly, homohexamer.

The protein localises to the cytoplasm. The enzyme catalyses UMP + ATP = UDP + ADP. It participates in pyrimidine metabolism; CTP biosynthesis via de novo pathway; UDP from UMP (UMPK route): step 1/1. Its activity is regulated as follows. Allosterically activated by GTP. Inhibited by UTP. In terms of biological role, catalyzes the reversible phosphorylation of UMP to UDP. The chain is Uridylate kinase from Mannheimia succiniciproducens (strain KCTC 0769BP / MBEL55E).